A 287-amino-acid chain; its full sequence is Leukocyte-associated immunoglobulin-like receptor 1 (287 aa).

Positions 1-21 (MSPHPTALLGLVLCLAQTIHT) are cleaved as a signal peptide. Over 22 to 165 (QEEDLPRPSI…SQGLKAEHLY (144 aa)) the chain is Extracellular. Positions 29–117 (PSISAEPGTV…KWSEQSDYLE (89 aa)) constitute an Ig-like C2-type domain. Cys-49 and Cys-101 are disulfide-bonded. A glycan (N-linked (GlcNAc...) asparagine) is linked at Asn-69. The tract at residues 121–155 (KESSGGPDSPDTEPGSSAGPTQRPSDNSHNEHAPA) is disordered. Over residues 134–145 (PGSSAGPTQRPS) the composition is skewed to polar residues. Residues 166-186 (ILIGVSVVFLFCLLLLVLFCL) form a helical membrane-spanning segment. The Cytoplasmic segment spans residues 187–287 (HRQNQIKQGP…SITYAAVARH (101 aa)). The disordered stretch occupies residues 192-211 (IKQGPPRSKDEEQKPQQRPD). The span at 198–208 (RSKDEEQKPQQ) shows a compositional bias: basic and acidic residues. 2 consecutive short sequence motifs (ITIM motif) follow at residues 249 to 254 (VTYAQL) and 279 to 284 (ITYAAV). Phosphotyrosine is present on residues Tyr-251 and Tyr-281.

Interacts with SH2 domains of tyrosine-protein phosphatases PTPN6 and PTPN11. The interaction with PTPN6 is constitutive. Interacts with the SH2 domain of CSK. Binds with high affinity to extracellular matrix collagens, the interaction is functionally important. In terms of processing, phosphorylation at Tyr-251 and Tyr-281 activates it. May be phosphorylated by LCK. Post-translationally, N-glycosylated. In terms of tissue distribution, expressed on the majority of peripheral mononuclear cells, including natural killer (NK) cells, T-cells, B-cells, monocytes, and dendritic cells. Highly expressed in naive T-cells and B-cells but no expression on germinal center B-cells. Abnormally low expression in naive B-cells from HIV-1 infected patients. Very low expression in NK cells from a patient with chronic active Epstein-Barr virus infection.

It localises to the cell membrane. Functions as an inhibitory receptor that plays a constitutive negative regulatory role on cytolytic function of natural killer (NK) cells, B-cells and T-cells. Activation by Tyr phosphorylation results in recruitment and activation of the phosphatases PTPN6 and PTPN11. It also reduces the increase of intracellular calcium evoked by B-cell receptor ligation. May also play its inhibitory role independently of SH2-containing phosphatases. Modulates cytokine production in CD4+ T-cells, down-regulating IL2 and IFNG production while inducing secretion of transforming growth factor beta. Also down-regulates IgG and IgE production in B-cells as well as IL8, IL10 and TNF secretion. Inhibits proliferation and induces apoptosis in myeloid leukemia cell lines as well as prevents nuclear translocation of NF-kappa-B p65 subunit/RELA and phosphorylation of I-kappa-B alpha/CHUK in these cells. Inhibits the differentiation of peripheral blood precursors towards dendritic cells. This Homo sapiens (Human) protein is Leukocyte-associated immunoglobulin-like receptor 1 (LAIR1).